Consider the following 125-residue polypeptide: Ribonuclease P protein component 1 (125 aa).

The segment covering 1-13 (MRRNGKEGKDRAP) has biased composition (basic and acidic residues). Residues 1–24 (MRRNGKEGKDRAPGRPQRKGQEVA) form a disordered region.

The protein belongs to the eukaryotic/archaeal RNase P protein component 1 family. As to quaternary structure, consists of a catalytic RNA component and at least 4-5 protein subunits.

It is found in the cytoplasm. It catalyses the reaction Endonucleolytic cleavage of RNA, removing 5'-extranucleotides from tRNA precursor.. In terms of biological role, part of ribonuclease P, a protein complex that generates mature tRNA molecules by cleaving their 5'-ends. The sequence is that of Ribonuclease P protein component 1 from Thermococcus onnurineus (strain NA1).